A 347-amino-acid chain; its full sequence is Ribosomal RNA small subunit methyltransferase C (347 aa).

The protein belongs to the methyltransferase superfamily. RsmC family. In terms of assembly, monomer.

It is found in the cytoplasm. It carries out the reaction guanosine(1207) in 16S rRNA + S-adenosyl-L-methionine = N(2)-methylguanosine(1207) in 16S rRNA + S-adenosyl-L-homocysteine + H(+). Specifically methylates the guanine in position 1207 of 16S rRNA in the 30S particle. The polypeptide is Ribosomal RNA small subunit methyltransferase C (Shewanella baltica (strain OS155 / ATCC BAA-1091)).